Consider the following 224-residue polypeptide: Inhibitor of apoptosis protein (224 aa).

Residues 29–92 form a BIR repeat; it reads IDARNQSFAI…GFWSRNCGFM (64 aa). 4 residues coordinate Zn(2+): C62, C65, H82, and C89.

This sequence belongs to the asfivirus IAP family. As to quaternary structure, interacts with subunit p17 of host CASP3.

The protein resides in the host cytoplasm. It localises to the virion. In terms of biological role, prevent apoptosis of host cell by inhibiting caspase-3/CASP3 activation to promote the viral replication. Also induces the activation of host NF-kappaB. In African swine fever virus (isolate Pig/Haiti/H811/1981) (ASFV), this protein is Inhibitor of apoptosis protein (p27).